Consider the following 945-residue polypeptide: MDKILIRGARTHNLKNVDLTLPRDKLIVITGLSGSGKSSLAFDTLYAEGQRRYVESLSAYARQFLSMMEKPDVDTIEGLSPAISIEQKSTSHNPRSTVGTITEIYDYLRLLYARVGTPRCPDHDIPLEAQTVSQMVDQVLALPEGSKLMLLAPVIRERKGEHLAVFDEMRAQGFVRARVDGKLYELDEVPKLDKQKKHSIDVVVDRFKVRADLQQRLAESFETALSLADGIALVAPMDEDEDVEEIIFSARFACPVCGHSISELEPKLFSFNNPAGACPTCDGLGVKQFFDARRVVNGELTLAEGAIRGWDRRNVYYFQMLGSLAQHYGFSLEEPFDELGAEHQKVVLYGSGRENVDFRYLNDRGDIVKRSHPFEGILPNLERRYRETESATVREELAKFLSTQPCPDCHGTRLRREARHVWVGDRTLPAITAMPVGEACEYAAGLSLTGRRGEIAAKILKEIRDRLQFLVNVGLDYLTLDRSADTLSGGEAQRIRLASQIGAGLVGVMYILDEPSIGLHQRDNERLLGTLTHLRNLGNTVIVVEHDEDAIRLADYVVDIGPGAGVHGGQVVAEGTPDQVMNHPDSLTGKYLSGRKKIAVPAKRTPRDKKKLLKLKGARGNNLQNVNLEIPVGLFTCITGVSGSGKSTLINNTLFPITATALNGATTLEVAPYDSFDGLQHLDKVVDIDQSPIGRTPRSNPATYTGLFTPIRELFSGVPEARSRGYGPGRFSFNVKGGRCEACQGDGVIKVEMHFLPDIYVPCDVCKGKRYNRETLEIRYKGKSIHEVLEMTIEEAREFFDAVPALARKLQTLMDVGLSYIKLGQSATTLSGGEAQRVKLSRELSKRDTGKTLYILDEPTTGLHFADIQQLLDVLHRLRDHGNTVVVIEHNLDVIKTADWLVDLGPEGGSKGGQIIANGTPEQVAEMPQSHTGHFLKPLLERDRA.

31-38 (GLSGSGKS) is an ATP binding site. Residues 254-281 (CPVCGHSISELEPKLFSFNNPAGACPTC) form a C4-type zinc finger. 2 consecutive ABC transporter domains span residues 310–587 (WDRR…PDSL) and 607–937 (RDKK…HFLK). ATP is bound at residue 640–647 (GVSGSGKS). The C4-type zinc-finger motif lies at 740–766 (CEACQGDGVIKVEMHFLPDIYVPCDVC).

Belongs to the ABC transporter superfamily. UvrA family. Forms a heterotetramer with UvrB during the search for lesions.

Its subcellular location is the cytoplasm. In terms of biological role, the UvrABC repair system catalyzes the recognition and processing of DNA lesions. UvrA is an ATPase and a DNA-binding protein. A damage recognition complex composed of 2 UvrA and 2 UvrB subunits scans DNA for abnormalities. When the presence of a lesion has been verified by UvrB, the UvrA molecules dissociate. In Pseudomonas aeruginosa (strain ATCC 15692 / DSM 22644 / CIP 104116 / JCM 14847 / LMG 12228 / 1C / PRS 101 / PAO1), this protein is UvrABC system protein A.